The following is a 432-amino-acid chain: Adenylosuccinate synthetase (432 aa).

Residues 13–19 and 41–43 contribute to the GTP site; these read GDEGKGK and GHT. The Proton acceptor role is filled by Asp-14. Positions 14 and 41 each coordinate Mg(2+). IMP-binding positions include 14–17, 39–42, Thr-130, Arg-144, Gln-225, Thr-240, and Arg-304; these read DEGK and NAGH. His-42 functions as the Proton donor in the catalytic mechanism. 300–306 is a substrate binding site; that stretch reads ATTGRRR. GTP contacts are provided by residues Arg-306, 332-334, and 415-417; these read KLD and STG.

Belongs to the adenylosuccinate synthetase family. Homodimer. Requires Mg(2+) as cofactor.

It is found in the cytoplasm. The catalysed reaction is IMP + L-aspartate + GTP = N(6)-(1,2-dicarboxyethyl)-AMP + GDP + phosphate + 2 H(+). It participates in purine metabolism; AMP biosynthesis via de novo pathway; AMP from IMP: step 1/2. In terms of biological role, plays an important role in the de novo pathway of purine nucleotide biosynthesis. Catalyzes the first committed step in the biosynthesis of AMP from IMP. The polypeptide is Adenylosuccinate synthetase (Serratia proteamaculans (strain 568)).